Here is a 327-residue protein sequence, read N- to C-terminus: Phenylalanine--tRNA ligase alpha subunit (327 aa).

Glu252 provides a ligand contact to Mg(2+).

Belongs to the class-II aminoacyl-tRNA synthetase family. Phe-tRNA synthetase alpha subunit type 1 subfamily. Tetramer of two alpha and two beta subunits. Mg(2+) serves as cofactor.

It localises to the cytoplasm. It catalyses the reaction tRNA(Phe) + L-phenylalanine + ATP = L-phenylalanyl-tRNA(Phe) + AMP + diphosphate + H(+). This chain is Phenylalanine--tRNA ligase alpha subunit, found in Vibrio campbellii (strain ATCC BAA-1116).